A 102-amino-acid chain; its full sequence is Cell division topological specificity factor (102 aa).

Belongs to the MinE family.

Prevents the cell division inhibition by proteins MinC and MinD at internal division sites while permitting inhibition at polar sites. This ensures cell division at the proper site by restricting the formation of a division septum at the midpoint of the long axis of the cell. This Synechococcus sp. (strain CC9605) protein is Cell division topological specificity factor.